We begin with the raw amino-acid sequence, 94 residues long: MKRKIIVACGGAVATSTMAAEEIKELCQNHNIPVELIQCRVNEIETYMDGVHLICTTAKVDRSFGDIPLVHGMPFISGIGIEALQNKILTILQG.

Positions 1 to 94 (MKRKIIVACG…QNKILTILQG (94 aa)) constitute a PTS EIIB type-2 domain. Cys9 serves as the catalytic Phosphocysteine intermediate; for EIIB activity. Cys9 carries the phosphocysteine; by EIIA modification.

As to quaternary structure, forms a complex with one each of subunit of GatA, GatB and 2 subunits of GatC.

The protein resides in the cytoplasm. It catalyses the reaction galactitol(out) + N(pros)-phospho-L-histidyl-[protein] = galactitol 1-phosphate(in) + L-histidyl-[protein]. Functionally, the phosphoenolpyruvate-dependent sugar phosphotransferase system (PTS), a major carbohydrate active transport system, catalyzes the phosphorylation of incoming sugar substrates concomitant with their translocation across the cell membrane. The enzyme II complex composed of GatA, GatB and GatC is involved in galactitol transport. It can also use D-glucitol. This Escherichia coli (strain K12) protein is PTS system galactitol-specific EIIB component.